The chain runs to 471 residues: Ribulose bisphosphate carboxylase large chain 2 (471 aa).

Substrate contacts are provided by Asn116 and Thr166. Lys168 acts as the Proton acceptor in catalysis. A substrate-binding site is contributed by Lys170. Mg(2+) is bound by residues Lys194, Asp196, and Glu197. At Lys194 the chain carries N6-carboxylysine. The active-site Proton acceptor is His287. Substrate contacts are provided by Arg288, His320, and Ser372.

Belongs to the RuBisCO large chain family. Type I subfamily. Heterohexadecamer of 8 large chains and 8 small chains. Forms a CsoS2-CsoS1-RuBisCO complex. The cofactor is Mg(2+).

Its subcellular location is the carboxysome. The enzyme catalyses 2 (2R)-3-phosphoglycerate + 2 H(+) = D-ribulose 1,5-bisphosphate + CO2 + H2O. It carries out the reaction D-ribulose 1,5-bisphosphate + O2 = 2-phosphoglycolate + (2R)-3-phosphoglycerate + 2 H(+). In terms of biological role, ruBisCO catalyzes two reactions: the carboxylation of D-ribulose 1,5-bisphosphate, the primary event in carbon dioxide fixation, as well as the oxidative fragmentation of the pentose substrate. Both reactions occur simultaneously and in competition at the same active site. Replacing the endogenous type I ccbLS genes in H.neapolitanus with this carboxysomally targeted enzyme reconstitutes RuBisCO with about 25% of normal activity; the active enzyme is targeted to carboxysomes. The polypeptide is Ribulose bisphosphate carboxylase large chain 2 (Hydrogenovibrio crunogenus (strain DSM 25203 / XCL-2) (Thiomicrospira crunogena)).